The following is a 404-amino-acid chain: Odorant receptor 74a (404 aa).

Residues 1–38 (MSFHRYRPRLPGGELAPMPWPVSLYRVLNHVAWPLEAE) lie on the Cytoplasmic side of the membrane. A helical transmembrane segment spans residues 39–59 (SGRWTVFLDRLMIFLGFLVFC). At 60–67 (EHNEVDFH) the chain is on the extracellular side. The chain crosses the membrane as a helical span at residues 68–88 (YLIANRQDMDNMLTGLPTYLI). Residues 89–141 (LVEMQIRCFQLAWHKDRFRALLQRFYAEIYVSEEMEPHLFASIQRQMLATRVN) lie on the Cytoplasmic side of the membrane. Residues 142-162 (STVYLLALLNFFLVPVTNVIY) form a helical membrane-spanning segment. Topologically, residues 163-181 (HRREMLYKQVYPFDNTQLH) are extracellular. A helical transmembrane segment spans residues 182-202 (FFIPLLVLNFWVGFIITSMLF). The Cytoplasmic segment spans residues 203-274 (GELNVMGELM…QRVEKEFTLR (72 aa)). Residues 275–295 (IFVMFAFSAGLLCALFFKAFT) form a helical membrane-spanning segment. The Extracellular portion of the chain corresponds to 296–303 (NPWGNVAY). Residues 304–324 (IVWFLAKFMELLALGMLGSIL) form a helical membrane-spanning segment. The Cytoplasmic segment spans residues 325–380 (LKTTDELGMMYYTADWEQVIHQSDNVGENVKLMKLVTLAIQLNSRPFFITGLNYFR). Residues 381-401 (VSLTAVLKIIQGAFSYFTFLN) form a helical membrane-spanning segment. The Extracellular portion of the chain corresponds to 402–404 (SMR).

This sequence belongs to the insect chemoreceptor superfamily. Heteromeric odorant receptor channel (TC 1.A.69) family. Or1a subfamily. As to quaternary structure, interacts with Orco. Complexes exist early in the endomembrane system in olfactory sensory neurons (OSNs), coupling these complexes to the conserved ciliary trafficking pathway.

Its subcellular location is the cell membrane. Its function is as follows. Odorant receptor which mediates acceptance or avoidance behavior, depending on its substrates. The odorant receptor repertoire encodes a large collection of odor stimuli that vary widely in identity, intensity, and duration. May form a complex with Orco to form odorant-sensing units, providing sensitive and prolonged odorant signaling and calcium permeability. Involved in the behavioral responses to octanol, anisole, and 2-heptanone. The protein is Odorant receptor 74a (Or74a) of Drosophila melanogaster (Fruit fly).